Here is a 124-residue protein sequence, read N- to C-terminus: UPF0102 protein Meso_4010 (124 aa).

It belongs to the UPF0102 family.

This Chelativorans sp. (strain BNC1) protein is UPF0102 protein Meso_4010.